The primary structure comprises 630 residues: Mitochondrial Rho GTPase 1 (630 aa).

A Miro 1 domain is found at Met1–Tyr168. Residues Met1–Gln598 are Cytoplasmic-facing. GTP is bound by residues Gly10–Ser17, Asp57–Asp61, and Asn113–Glu116. 2 consecutive EF-hand domains span residues Ala184–Lys219 and Lys304–Leu339. Ca(2+) contacts are provided by Asp197, Asn199, Asp201, Glu208, Asp317, Asp319, Asp321, and Glu328. In terms of domain architecture, Miro 2 spans Arg419–Tyr579. GTP contacts are provided by residues Gly428–Thr435, Glu459–Thr463, and Thr527–Asp530. Residues Leu599 to Trp619 form a helical; Anchor for type IV membrane protein membrane-spanning segment. At Lys620–Lys630 the chain is on the mitochondrial intermembrane side.

The protein belongs to the mitochondrial Rho GTPase family.

It localises to the mitochondrion outer membrane. Mitochondrial GTPase involved in mitochondrial trafficking. Probably involved in control of anterograde transport of mitochondria and their subcellular distribution. The protein is Mitochondrial Rho GTPase 1 (gem1) of Schizosaccharomyces pombe (strain 972 / ATCC 24843) (Fission yeast).